The chain runs to 950 residues: MVFTPEDRLGKQCLLLPLLLLAAWKVGSGQLHYSVPEEAKHGTFVGRIAQDLGLELAELVPRLFRMASKDREDLLEVNLQNGILFVNSRIDREELCGRSAECSIHLEVIVDRPLQVFHVDVEVRDINDNPPLFPVEEQRVLIYESRLPDSVFPLEGASDADVGSNSILTYKLSSSEYFGLDVKINSDDNKQIGLLLKKSLDREEAPAHNLFLTATDGGKPELTGTVQLLVTVLDVNDNAPTFEQSEYEVRIFENADNGTTVIRLNASDRDEGANGAISYSFNSLVAAMVIDHFSIDRNTGEIVIRGNLDFEQENLYKILIDATDKGHPPMAGHCTVLVRILDKNDNVPEIALTSLSLPVREDAQFGTVIALISVNDLDSGANGQVNCSLTPHVPFKLVSTFKNYYSLVLDSALDRESVSAYELVVTARDGGSPSLWATASLSVEVADMNDNAPAFAQPEYTVFVKENNPPGCHIFTVSARDADAQENALVSYSLVERRVGERALSSYISVHAESGKVYALQPLDHEELELLQFQVSARDAGVPPLGSNVTLQVFVLDENDNAPALLAPRVGGTGGAVSELVPRSLGAGQVVAKVRAVDADSGYNAWLSYELQPPASSARFPFRVGLYTGEISTTRVLDEADSPRHRLLVLVKDHGEPALTATATVLVSLVESGQAPKASSRASVGAAGPEAALVDVNVYLIIAICAVSSLLVLTLLLYTALRCSAPPTEGACTADKPTLVCSSAVGSWSYSQQRRQRVCSGEGPPKMDLMAFSPSLSPCPIMMGKAENQDLNEDHDAKPRQPNPDWRYSASLRAGMHSSVHLEEAGILRAGPGGPDQQWPTVSSATPEPEAGEVSPPVGAGVNSNSWTFKYGPGNPKQSGPGELPDKFIIPGSPAIISIRQEPTNSQIDKSDFITFGKKEETKKKKKKKKGNKTQEKKEKGNSTTDNSDQ.

A signal peptide spans 1 to 29; it reads MVFTPEDRLGKQCLLLPLLLLAAWKVGSG. Residues 30 to 697 are Extracellular-facing; the sequence is QLHYSVPEEA…GPEAALVDVN (668 aa). 6 Cadherin domains span residues 34-133, 157-242, 243-350, 351-455, 456-565, and 581-678; these read SVPE…PPLF, ASDA…APTF, EQSE…VPEI, ALTS…APAF, AQPE…APAL, and VPRS…APKA. Asn-257, Asn-265, Asn-386, and Asn-548 each carry an N-linked (GlcNAc...) asparagine glycan. A helical membrane pass occupies residues 698–718; that stretch reads VYLIIAICAVSSLLVLTLLLY. The Cytoplasmic portion of the chain corresponds to 719–950; it reads TALRCSAPPT…GNSTTDNSDQ (232 aa). 4 PXXP repeats span residues 799-802, 832-835, 873-876, and 891-894; these read PRQP, PGGP, PGNP, and PGSP. Positions 799–894 are 4 X 4 AA repeats of P-X-X-P; sequence PRQPNPDWRY…PDKFIIPGSP (96 aa). The tract at residues 830–950 is disordered; that stretch reads AGPGGPDQQW…GNSTTDNSDQ (121 aa). Positions 909–923 are enriched in basic and acidic residues; that stretch reads DKSDFITFGKKEETK.

It localises to the cell membrane. The protein resides in the secreted. In terms of biological role, potential calcium-dependent cell-adhesion protein. May be involved in the establishment and maintenance of specific neuronal connections in the brain. The chain is Protocadherin alpha-6 (PCDHA6) from Homo sapiens (Human).